We begin with the raw amino-acid sequence, 548 residues long: Chaperonin GroEL (548 aa).

ATP-binding positions include 30-33 (TLGP), K51, 87-91 (DGTTT), G415, 478-480 (NAA), and D494.

This sequence belongs to the chaperonin (HSP60) family. Forms a cylinder of 14 subunits composed of two heptameric rings stacked back-to-back. Interacts with the co-chaperonin GroES.

The protein resides in the cytoplasm. The enzyme catalyses ATP + H2O + a folded polypeptide = ADP + phosphate + an unfolded polypeptide.. In terms of biological role, together with its co-chaperonin GroES, plays an essential role in assisting protein folding. The GroEL-GroES system forms a nano-cage that allows encapsulation of the non-native substrate proteins and provides a physical environment optimized to promote and accelerate protein folding. This Trichlorobacter lovleyi (strain ATCC BAA-1151 / DSM 17278 / SZ) (Geobacter lovleyi) protein is Chaperonin GroEL.